The sequence spans 99 residues: U1-theraphotoxin-Lsp1c (99 aa).

A signal peptide spans 1 to 23; the sequence is MRKITIRALLLCSLLLVFHTSAA. The propeptide occupies 24–50; the sequence is AELQAQEGHLMIPGDTDTALETVDDER. 4 cysteine pairs are disulfide-bonded: Cys-54–Cys-67, Cys-58–Cys-91, Cys-72–Cys-74, and Cys-85–Cys-96.

This sequence belongs to the neurotoxin 12 (Hwtx-2) family. 04 (lasiotoxin) subfamily. As to expression, expressed by the venom gland.

It localises to the secreted. Its function is as follows. Toxin that causes irreversible contractile paralysis into adult Aedes aegypti resulting in 100% mortality after 24 hours. This Lasiodora sp. (strain IBSP 8539) (Brazilian salmon pink birdeater) protein is U1-theraphotoxin-Lsp1c.